The sequence spans 226 residues: TPD1 protein homolog 1A (226 aa).

The signal sequence occupies residues 1-35; sequence MRVSSASSTPPPPAFAAAAWAVVLLAMLRSDVALA.

As to quaternary structure, interacts with MSP1. Expressed in roots, and anthers and ovules during meiosis.

Functionally, involved in cell specification during anther development. Required for the differentiation of primary parietal cells into secondary parietal cells in anthers. May serve as an extracellular ligand for the MSP1 receptor kinase to limit sporocyte number in ovules. The sequence is that of TPD1 protein homolog 1A from Oryza sativa subsp. japonica (Rice).